The sequence spans 407 residues: Glucan 1,3-beta-glucosidase 1 (407 aa).

A signal peptide spans 1–22 (MLSFTSVFSFFLHALLLKTAFS). Glutamate 213 functions as the Proton donor in the catalytic mechanism. Cysteine 295 and cysteine 406 form a disulfide bridge. Glutamate 312 (nucleophile) is an active-site residue.

The protein belongs to the glycosyl hydrolase 5 (cellulase A) family.

The protein localises to the secreted. The catalysed reaction is Successive hydrolysis of beta-D-glucose units from the non-reducing ends of (1-&gt;3)-beta-D-glucans, releasing alpha-glucose.. Functionally, beta-glucanases participate in the metabolism of beta-glucan, the main structural component of the cell wall. It could also function biosynthetically as a transglycosylase. The protein is Glucan 1,3-beta-glucosidase 1 (exg1) of Schizosaccharomyces pombe (strain 972 / ATCC 24843) (Fission yeast).